Here is a 309-residue protein sequence, read N- to C-terminus: Probable manganese-dependent inorganic pyrophosphatase (309 aa).

Residues His9, Asp13, Asp15, Asp75, His97, and Asp149 each coordinate Mn(2+).

Belongs to the PPase class C family. Mn(2+) is required as a cofactor.

Its subcellular location is the cytoplasm. It catalyses the reaction diphosphate + H2O = 2 phosphate + H(+). The sequence is that of Probable manganese-dependent inorganic pyrophosphatase from Bacillus cereus (strain ATCC 10987 / NRS 248).